Reading from the N-terminus, the 206-residue chain is Large ribosomal subunit protein uL4 (206 aa).

Residues 48–75 (TQSAKTRAEVSGGGIKPWRQKGTGRARQ) form a disordered region.

The protein belongs to the universal ribosomal protein uL4 family. Part of the 50S ribosomal subunit.

Functionally, one of the primary rRNA binding proteins, this protein initially binds near the 5'-end of the 23S rRNA. It is important during the early stages of 50S assembly. It makes multiple contacts with different domains of the 23S rRNA in the assembled 50S subunit and ribosome. Its function is as follows. Forms part of the polypeptide exit tunnel. This is Large ribosomal subunit protein uL4 from Clostridium botulinum (strain Loch Maree / Type A3).